The chain runs to 194 residues: Holliday junction branch migration complex subunit RuvA (194 aa).

Residues 1–64 (MISRLTGKLV…EDAHLLFGFA (64 aa)) form a domain I region. The domain II stretch occupies residues 65 to 143 (TAEERKTFRQ…AHAVTDGLFA (79 aa)). Positions 144 to 147 (AAPA) are flexible linker. The segment at 147–194 (AADETEDIVGTLLALGYSEREAKAAVKGVPEGTDVGEGVRLALKNLLK) is domain III.

This sequence belongs to the RuvA family. In terms of assembly, homotetramer. Forms an RuvA(8)-RuvB(12)-Holliday junction (HJ) complex. HJ DNA is sandwiched between 2 RuvA tetramers; dsDNA enters through RuvA and exits via RuvB. An RuvB hexamer assembles on each DNA strand where it exits the tetramer. Each RuvB hexamer is contacted by two RuvA subunits (via domain III) on 2 adjacent RuvB subunits; this complex drives branch migration. In the full resolvosome a probable DNA-RuvA(4)-RuvB(12)-RuvC(2) complex forms which resolves the HJ.

The protein resides in the cytoplasm. Its function is as follows. The RuvA-RuvB-RuvC complex processes Holliday junction (HJ) DNA during genetic recombination and DNA repair, while the RuvA-RuvB complex plays an important role in the rescue of blocked DNA replication forks via replication fork reversal (RFR). RuvA specifically binds to HJ cruciform DNA, conferring on it an open structure. The RuvB hexamer acts as an ATP-dependent pump, pulling dsDNA into and through the RuvAB complex. HJ branch migration allows RuvC to scan DNA until it finds its consensus sequence, where it cleaves and resolves the cruciform DNA. The polypeptide is Holliday junction branch migration complex subunit RuvA (Neisseria meningitidis serogroup A / serotype 4A (strain DSM 15465 / Z2491)).